Reading from the N-terminus, the 363-residue chain is Ribosomal RNA large subunit methyltransferase M (363 aa).

S-adenosyl-L-methionine contacts are provided by residues Ser-190, 223 to 226 (CPGG), Asp-242, Asp-262, and Asp-279. The Proton acceptor role is filled by Lys-308.

It belongs to the class I-like SAM-binding methyltransferase superfamily. RNA methyltransferase RlmE family. RlmM subfamily. As to quaternary structure, monomer.

The protein localises to the cytoplasm. It catalyses the reaction cytidine(2498) in 23S rRNA + S-adenosyl-L-methionine = 2'-O-methylcytidine(2498) in 23S rRNA + S-adenosyl-L-homocysteine + H(+). Functionally, catalyzes the 2'-O-methylation at nucleotide C2498 in 23S rRNA. The chain is Ribosomal RNA large subunit methyltransferase M from Vibrio atlanticus (strain LGP32) (Vibrio splendidus (strain Mel32)).